A 504-amino-acid chain; its full sequence is Acetylcholine receptor subunit epsilon (504 aa).

The N-terminal stretch at 1–19 (MESGVRILSLLILLHNSLA) is a signal peptide. Residues 20–240 (SESEESRLIK…IVFNLIIQRK (221 aa)) are Extracellular-facing. N-linked (GlcNAc...) asparagine glycans are attached at residues N88 and N161. The cysteines at positions 148 and 162 are disulfide-linked. Residues 241 to 265 (PLFYIINIIVPCVLISFLVVLVYFL) traverse the membrane as a helical segment. At 266–273 (PAKAGGQK) the chain is on the cytoplasmic side. Residues 274-292 (CTVSISVLLAQTVFLFLIA) form a helical membrane-spanning segment. Residues 293–307 (QMVPETSLSVPLIGK) are Extracellular-facing. The helical transmembrane segment at 308-329 (YLMFVMFVSTLIVLSCVIVLNV) threads the bilayer. Residues 330–473 (SLRSPSTHNL…WILIGKVLDV (144 aa)) are Cytoplasmic-facing. A helical transmembrane segment spans residues 474–497 (LCFWVALPLFVLGTLAIFLMGHFN). Residues 498 to 504 (TAPEHPF) are Extracellular-facing.

The protein belongs to the ligand-gated ion channel (TC 1.A.9) family. Acetylcholine receptor (TC 1.A.9.1) subfamily. Epsilon/CHRNE sub-subfamily. As to quaternary structure, pentamer of two alpha chains, and one each of the beta, delta, and gamma (in immature muscle) or epsilon (in mature muscle) chains.

It is found in the postsynaptic cell membrane. Its subcellular location is the cell membrane. The catalysed reaction is K(+)(in) = K(+)(out). It catalyses the reaction Na(+)(in) = Na(+)(out). In terms of biological role, after binding acetylcholine, the AChR responds by an extensive change in conformation that affects all subunits and leads to opening of an ion-conducting channel across the plasma membrane. This Xenopus laevis (African clawed frog) protein is Acetylcholine receptor subunit epsilon (chrne).